Consider the following 3106-residue polypeptide: Probable polyketide synthase 29 (3106 aa).

Residues 1–11 (MVQNTDNTRNS) show a composition bias toward polar residues. The tract at residues 1–20 (MVQNTDNTRNSKLIRDRNDY) is disordered. The 434-residue stretch at 28–461 (SGDIAVIGIG…GSNVCLILSE (434 aa)) folds into the Ketosynthase family 3 (KS3) domain. Active-site for beta-ketoacyl synthase activity residues include Cys200, His339, and His384. Residues 661–694 (GVSADIIIGHSLGEVSSPYCSGMIDFQTLCYLTY) form an acyl/malonyl transferase region. Ser671 acts as the For acyl/malonyl transferase activity in catalysis. An N-terminal hotdog fold region spans residues 961–1082 (PSIHGLGNNT…GNFSLTKHNS (122 aa)). The PKS/mFAS DH domain maps to 961 to 1266 (PSIHGLGNNT…CALVSLDSNP (306 aa)). The active-site Proton acceptor; for dehydratase activity is His994. Residues 1099–1266 (NFTSISKQDF…CALVSLDSNP (168 aa)) are C-terminal hotdog fold. Catalysis depends on Asp1171, which acts as the Proton donor; for dehydratase activity. The region spanning 2533-2610 (NNNEIIRSTI…QSIEIILSAH (78 aa)) is the Carrier domain. Position 2570 is an O-(pantetheine 4'-phosphoryl)serine (Ser2570). The stretch at 2609-2656 (AHNNNNKNNNNNNNINNNNKNNNNNNNKNNNNINNNINNNKNNNNNNN) forms a coiled coil. Residues 2614–2656 (NKNNNNNNNINNNNKNNNNNNNKNNNNINNNINNNKNNNNNNN) form a disordered region.

Requires pantetheine 4'-phosphate as cofactor.

In terms of biological role, probable polyketide synthase. This is Probable polyketide synthase 29 (pks29) from Dictyostelium discoideum (Social amoeba).